Here is a 178-residue protein sequence, read N- to C-terminus: 3-hydroxyacyl-[acyl-carrier-protein] dehydratase FabZ (178 aa).

Histidine 54 is a catalytic residue.

It belongs to the thioester dehydratase family. FabZ subfamily.

Its subcellular location is the cytoplasm. The enzyme catalyses a (3R)-hydroxyacyl-[ACP] = a (2E)-enoyl-[ACP] + H2O. Functionally, involved in unsaturated fatty acids biosynthesis. Catalyzes the dehydration of short chain beta-hydroxyacyl-ACPs and long chain saturated and unsaturated beta-hydroxyacyl-ACPs. The polypeptide is 3-hydroxyacyl-[acyl-carrier-protein] dehydratase FabZ (Yersinia enterocolitica).